We begin with the raw amino-acid sequence, 232 residues long: Uracil-DNA glycosylase (232 aa).

Residue D70 is the Proton acceptor of the active site.

It belongs to the uracil-DNA glycosylase (UDG) superfamily. UNG family.

The protein resides in the cytoplasm. It catalyses the reaction Hydrolyzes single-stranded DNA or mismatched double-stranded DNA and polynucleotides, releasing free uracil.. Its function is as follows. Excises uracil residues from the DNA which can arise as a result of misincorporation of dUMP residues by DNA polymerase or due to deamination of cytosine. This is Uracil-DNA glycosylase from Campylobacter fetus subsp. fetus (strain 82-40).